The following is a 180-amino-acid chain: Hypoxanthine-guanine phosphoribosyltransferase (180 aa).

The diphosphate site is built by Lys43 and Gly44. Positions 99 and 100 each coordinate Mg(2+). Asp103 functions as the Proton acceptor in the catalytic mechanism. GMP-binding positions include Lys131, Phe152–Val153, and Asp159. Arg165 is a diphosphate binding site.

The protein belongs to the purine/pyrimidine phosphoribosyltransferase family. The cofactor is Mg(2+).

The protein resides in the cytoplasm. The enzyme catalyses IMP + diphosphate = hypoxanthine + 5-phospho-alpha-D-ribose 1-diphosphate. The catalysed reaction is GMP + diphosphate = guanine + 5-phospho-alpha-D-ribose 1-diphosphate. It functions in the pathway purine metabolism; IMP biosynthesis via salvage pathway; IMP from hypoxanthine: step 1/1. The protein operates within purine metabolism; GMP biosynthesis via salvage pathway; GMP from guanine: step 1/1. Functionally, purine salvage pathway enzyme that catalyzes the transfer of the ribosyl-5-phosphate group from 5-phospho-alpha-D-ribose 1-diphosphate (PRPP) to the N9 position of the 6-oxopurines hypoxanthine and guanine to form the corresponding ribonucleotides IMP (inosine 5'-monophosphate) and GMP (guanosine 5'-monophosphate), with the release of PPi. The chain is Hypoxanthine-guanine phosphoribosyltransferase (hpt) from Streptococcus pneumoniae serotype 4 (strain ATCC BAA-334 / TIGR4).